A 99-amino-acid polypeptide reads, in one-letter code: UPF0213 protein SP_1535 (99 aa).

One can recognise a GIY-YIG domain in the interval 3 to 78; it reads HKAYMYVLEC…KRKKRPQKEE (76 aa).

This sequence belongs to the UPF0213 family.

The chain is UPF0213 protein SP_1535 from Streptococcus pneumoniae serotype 4 (strain ATCC BAA-334 / TIGR4).